The sequence spans 202 residues: LexA repressor (202 aa).

Positions 28–48 form a DNA-binding region, H-T-H motif; that stretch reads RAEIAQELGFKSPNAAEEHLK. Active-site for autocatalytic cleavage activity residues include S123 and K160.

It belongs to the peptidase S24 family. In terms of assembly, homodimer.

It catalyses the reaction Hydrolysis of Ala-|-Gly bond in repressor LexA.. Functionally, represses a number of genes involved in the response to DNA damage (SOS response), including recA and lexA. In the presence of single-stranded DNA, RecA interacts with LexA causing an autocatalytic cleavage which disrupts the DNA-binding part of LexA, leading to derepression of the SOS regulon and eventually DNA repair. The polypeptide is LexA repressor (Pseudomonas putida (Arthrobacter siderocapsulatus)).